A 469-amino-acid polypeptide reads, in one-letter code: UDP-N-acetylmuramate--L-alanine ligase (469 aa).

ATP is bound at residue 120–126 (GTHGKTT).

It belongs to the MurCDEF family.

The protein resides in the cytoplasm. It carries out the reaction UDP-N-acetyl-alpha-D-muramate + L-alanine + ATP = UDP-N-acetyl-alpha-D-muramoyl-L-alanine + ADP + phosphate + H(+). The protein operates within cell wall biogenesis; peptidoglycan biosynthesis. Cell wall formation. This chain is UDP-N-acetylmuramate--L-alanine ligase, found in Acetivibrio thermocellus (strain ATCC 27405 / DSM 1237 / JCM 9322 / NBRC 103400 / NCIMB 10682 / NRRL B-4536 / VPI 7372) (Clostridium thermocellum).